We begin with the raw amino-acid sequence, 79 residues long: Conotoxin ArMSGL-021 (79 aa).

Positions 1-20 (MSRLGIMVLTLLLLVFIVTS) are cleaved as a signal peptide. The propeptide occupies 21 to 44 (HQDAGEKQATHRGAINFRWRRSLI). 3 cysteine pairs are disulfide-bonded: Cys52-Cys64, Cys56-Cys73, and Cys63-Cys77. Position 78 is a leucine amide (Leu78).

It belongs to the conotoxin O3 superfamily. Expressed by the venom duct.

It is found in the secreted. The polypeptide is Conotoxin ArMSGL-021 (Conus arenatus (Sand-dusted cone)).